Reading from the N-terminus, the 188-residue chain is Augmin complex subunit dgt4 (188 aa).

Residues Gln141 to Asn163 are a coiled coil.

As to quaternary structure, component of the augmin complex composed of dgt2, dgt3, dgt4, dgt5, dgt6, msd1, msd5 and wac. The complex interacts directly or indirectly with microtubules and is required for centrosome-independent generation of spindle microtubules.

Its subcellular location is the cytoplasm. The protein resides in the cytoskeleton. It is found in the spindle. As part of the augmin complex, plays a role in centrosome-independent generation of spindle microtubules. The complex is required for mitotic spindle assembly through its involvement in localizing gamma-tubulin to spindle microtubules. The protein is Augmin complex subunit dgt4 of Drosophila melanogaster (Fruit fly).